Here is a 346-residue protein sequence, read N- to C-terminus: Phenylalanine--tRNA ligase alpha subunit (346 aa).

Residue E259 coordinates Mg(2+).

It belongs to the class-II aminoacyl-tRNA synthetase family. Phe-tRNA synthetase alpha subunit type 1 subfamily. In terms of assembly, tetramer of two alpha and two beta subunits. Mg(2+) serves as cofactor.

It localises to the cytoplasm. The enzyme catalyses tRNA(Phe) + L-phenylalanine + ATP = L-phenylalanyl-tRNA(Phe) + AMP + diphosphate + H(+). The polypeptide is Phenylalanine--tRNA ligase alpha subunit (Lactococcus lactis subsp. lactis (strain IL1403) (Streptococcus lactis)).